Reading from the N-terminus, the 299-residue chain is Ribosomal RNA small subunit methyltransferase H (299 aa).

S-adenosyl-L-methionine-binding positions include 24 to 26, D43, F68, D90, and Q97; that span reads GGH.

Belongs to the methyltransferase superfamily. RsmH family.

The protein localises to the cytoplasm. The catalysed reaction is cytidine(1402) in 16S rRNA + S-adenosyl-L-methionine = N(4)-methylcytidine(1402) in 16S rRNA + S-adenosyl-L-homocysteine + H(+). Specifically methylates the N4 position of cytidine in position 1402 (C1402) of 16S rRNA. The chain is Ribosomal RNA small subunit methyltransferase H from Francisella tularensis subsp. tularensis (strain WY96-3418).